A 465-amino-acid chain; its full sequence is Cysteine--tRNA ligase (465 aa).

Zn(2+) is bound at residue Cys-30. The 'HIGH' region signature appears at 32–42 (ITVYDYCHVGH). Zn(2+) is bound by residues Cys-214, His-239, and Glu-243. Positions 271–275 (KMSKS) match the 'KMSKS' region motif. Lys-274 serves as a coordination point for ATP.

This sequence belongs to the class-I aminoacyl-tRNA synthetase family. As to quaternary structure, monomer. Zn(2+) serves as cofactor.

The protein resides in the cytoplasm. The catalysed reaction is tRNA(Cys) + L-cysteine + ATP = L-cysteinyl-tRNA(Cys) + AMP + diphosphate. The protein is Cysteine--tRNA ligase of Burkholderia cenocepacia (strain ATCC BAA-245 / DSM 16553 / LMG 16656 / NCTC 13227 / J2315 / CF5610) (Burkholderia cepacia (strain J2315)).